A 714-amino-acid polypeptide reads, in one-letter code: Fatty acid oxidation complex subunit alpha (714 aa).

The interval 1–190 is enoyl-CoA hydratase; it reads MEMASVFTLN…KLGLVDDVVP (190 aa). Residues 306-714 are 3-hydroxyacyl-CoA dehydrogenase; sequence APLNSVGILG…FWKTTATDLQ (409 aa).

The protein in the N-terminal section; belongs to the enoyl-CoA hydratase/isomerase family. In the central section; belongs to the 3-hydroxyacyl-CoA dehydrogenase family. In terms of assembly, heterotetramer of two alpha chains (FadJ) and two beta chains (FadI).

The protein localises to the cytoplasm. It carries out the reaction a (3S)-3-hydroxyacyl-CoA = a (2E)-enoyl-CoA + H2O. The catalysed reaction is a 4-saturated-(3S)-3-hydroxyacyl-CoA = a (3E)-enoyl-CoA + H2O. The enzyme catalyses a (3S)-3-hydroxyacyl-CoA + NAD(+) = a 3-oxoacyl-CoA + NADH + H(+). It catalyses the reaction (3S)-3-hydroxybutanoyl-CoA = (3R)-3-hydroxybutanoyl-CoA. The protein operates within lipid metabolism; fatty acid beta-oxidation. Catalyzes the formation of a hydroxyacyl-CoA by addition of water on enoyl-CoA. Also exhibits 3-hydroxyacyl-CoA epimerase and 3-hydroxyacyl-CoA dehydrogenase activities. This is Fatty acid oxidation complex subunit alpha from Escherichia coli (strain SE11).